We begin with the raw amino-acid sequence, 437 residues long: ATP-dependent protease ATPase subunit HslU (437 aa).

ATP is bound by residues Val18, 60-65 (GCGKTE), Asp250, Glu315, and Arg387.

The protein belongs to the ClpX chaperone family. HslU subfamily. In terms of assembly, a double ring-shaped homohexamer of HslV is capped on each side by a ring-shaped HslU homohexamer. The assembly of the HslU/HslV complex is dependent on binding of ATP.

The protein localises to the cytoplasm. Its function is as follows. ATPase subunit of a proteasome-like degradation complex; this subunit has chaperone activity. The binding of ATP and its subsequent hydrolysis by HslU are essential for unfolding of protein substrates subsequently hydrolyzed by HslV. HslU recognizes the N-terminal part of its protein substrates and unfolds these before they are guided to HslV for hydrolysis. In Methylobacterium sp. (strain 4-46), this protein is ATP-dependent protease ATPase subunit HslU.